The chain runs to 334 residues: Glycerol-1-phosphate dehydrogenase [NAD(P)+] (334 aa).

NAD(+) contacts are provided by residues 77-81 (GRPID) and 99-102 (TTAS). Position 104 (D104) interacts with substrate. S108 contacts NAD(+). A substrate-binding site is contributed by D147. Zn(2+)-binding residues include D147 and H225. Substrate is bound at residue H229. Position 246 (H246) interacts with Zn(2+).

Belongs to the glycerol-1-phosphate dehydrogenase family. The cofactor is Zn(2+).

It localises to the cytoplasm. It carries out the reaction sn-glycerol 1-phosphate + NAD(+) = dihydroxyacetone phosphate + NADH + H(+). It catalyses the reaction sn-glycerol 1-phosphate + NADP(+) = dihydroxyacetone phosphate + NADPH + H(+). Its pathway is membrane lipid metabolism; glycerophospholipid metabolism. Its function is as follows. Catalyzes the NAD(P)H-dependent reduction of dihydroxyacetonephosphate (DHAP or glycerone phosphate) to glycerol 1-phosphate (G1P). The G1P thus generated is used as the glycerophosphate backbone of phospholipids in the cellular membranes of Archaea. The polypeptide is Glycerol-1-phosphate dehydrogenase [NAD(P)+] (Methanococcus maripaludis (strain C7 / ATCC BAA-1331)).